A 367-amino-acid chain; its full sequence is tRNA/tmRNA (uracil-C(5))-methyltransferase (367 aa).

5 residues coordinate S-adenosyl-L-methionine: glutamine 190, tyrosine 218, asparagine 223, glutamate 239, and aspartate 299. Cysteine 324 functions as the Nucleophile in the catalytic mechanism. Glutamate 358 serves as the catalytic Proton acceptor.

This sequence belongs to the class I-like SAM-binding methyltransferase superfamily. RNA M5U methyltransferase family. TrmA subfamily.

It catalyses the reaction uridine(54) in tRNA + S-adenosyl-L-methionine = 5-methyluridine(54) in tRNA + S-adenosyl-L-homocysteine + H(+). The enzyme catalyses uridine(341) in tmRNA + S-adenosyl-L-methionine = 5-methyluridine(341) in tmRNA + S-adenosyl-L-homocysteine + H(+). Functionally, dual-specificity methyltransferase that catalyzes the formation of 5-methyluridine at position 54 (m5U54) in all tRNAs, and that of position 341 (m5U341) in tmRNA (transfer-mRNA). This Yersinia pestis bv. Antiqua (strain Antiqua) protein is tRNA/tmRNA (uracil-C(5))-methyltransferase.